A 532-amino-acid chain; its full sequence is All-trans-retinyl ester 13-cis isomerohydrolase (532 aa).

Residue cysteine 112 is the site of S-palmitoyl cysteine; in membrane form attachment. Residues histidine 180, histidine 241, and histidine 313 each coordinate Fe cation. Cysteine 329 is lipidated: S-palmitoyl cysteine; in membrane form. Residue histidine 527 coordinates Fe cation.

This sequence belongs to the carotenoid oxygenase family. Fe(2+) serves as cofactor. In terms of processing, palmitoylated. In terms of tissue distribution, predominantly expressed in brain. Expressed at a low level in the eye.

Its subcellular location is the cytoplasm. The protein localises to the cell membrane. The enzyme catalyses an all-trans-retinyl ester + H2O = 13-cis-retinol + a fatty acid + H(+). It catalyses the reaction lutein = (3R,3'S)-zeaxanthin. Specifically generates 13-cis retinol, a stereoisomeric form of retinoic acid. Capable of catalyzing the isomerization of lutein to meso-zeaxanthin an eye-specific carotenoid. This is All-trans-retinyl ester 13-cis isomerohydrolase (rpe65b) from Danio rerio (Zebrafish).